Consider the following 319-residue polypeptide: Pantothenate kinase (319 aa).

An ATP-binding site is contributed by 101–108 (GSVAVGKS).

This sequence belongs to the prokaryotic pantothenate kinase family.

The protein localises to the cytoplasm. The catalysed reaction is (R)-pantothenate + ATP = (R)-4'-phosphopantothenate + ADP + H(+). It participates in cofactor biosynthesis; coenzyme A biosynthesis; CoA from (R)-pantothenate: step 1/5. The chain is Pantothenate kinase from Clavibacter sepedonicus (Clavibacter michiganensis subsp. sepedonicus).